The sequence spans 502 residues: Capsid protein (502 aa).

2 disordered regions span residues 369–392 (ISELPIASPPQNPHKYTVRPSDYD) and 405–487 (LTDS…TRKQ). Residues 447–456 (SRRRKRRRRS) show a composition bias toward basic residues.

This sequence belongs to the anelloviridae capsid protein family.

Its subcellular location is the virion. Self-assembles to form an icosahedral capsid with a T=1 symmetry, about 30 nm in diameter, and consisting of 60 capsid proteins. The capsid encapsulates the genomic DNA. Capsid protein is involved in attachment and entry into the host cell. In Tupaia, this protein is Capsid protein.